A 715-amino-acid polypeptide reads, in one-letter code: Polyribonucleotide nucleotidyltransferase (715 aa).

Asp-489 and Asp-495 together coordinate Mg(2+). In terms of domain architecture, KH spans 556–615 (PRIETLRIPTEKIREVIGTGGKVIREICEKTGAKINIEDDGTVKVASSDGNSIKAAINWI). Residues 625-693 (GHIYDGTVVK…DRGKVRLSMR (69 aa)) enclose the S1 motif domain.

The protein belongs to the polyribonucleotide nucleotidyltransferase family. Mg(2+) is required as a cofactor.

It localises to the cytoplasm. It catalyses the reaction RNA(n+1) + phosphate = RNA(n) + a ribonucleoside 5'-diphosphate. In terms of biological role, involved in mRNA degradation. Catalyzes the phosphorolysis of single-stranded polyribonucleotides processively in the 3'- to 5'-direction. The chain is Polyribonucleotide nucleotidyltransferase from Beijerinckia indica subsp. indica (strain ATCC 9039 / DSM 1715 / NCIMB 8712).